Consider the following 71-residue polypeptide: MKTKVVMCSGLFCSVFAGAFMLNQYDGRSGVAACDEWELYLLEHHLSARMSETESKDLPFGPREYIRIVNK.

Residues 5–22 (VVMCSGLFCSVFAGAFML) form a helical membrane-spanning segment.

It localises to the membrane. This is an uncharacterized protein from Bacillus subtilis (strain 168).